Here is a 315-residue protein sequence, read N- to C-terminus: Ribose-phosphate pyrophosphokinase (315 aa).

ATP-binding positions include Asp-37–Glu-39 and Arg-96–Gln-97. Residues His-131 and Asp-170 each coordinate Mg(2+). Residue Lys-194 is part of the active site. Residues Arg-196, Asp-220, and Asp-224–Thr-228 each bind D-ribose 5-phosphate.

Belongs to the ribose-phosphate pyrophosphokinase family. Class I subfamily. Homohexamer. Mg(2+) serves as cofactor.

It is found in the cytoplasm. It carries out the reaction D-ribose 5-phosphate + ATP = 5-phospho-alpha-D-ribose 1-diphosphate + AMP + H(+). The protein operates within metabolic intermediate biosynthesis; 5-phospho-alpha-D-ribose 1-diphosphate biosynthesis; 5-phospho-alpha-D-ribose 1-diphosphate from D-ribose 5-phosphate (route I): step 1/1. Its function is as follows. Involved in the biosynthesis of the central metabolite phospho-alpha-D-ribosyl-1-pyrophosphate (PRPP) via the transfer of pyrophosphoryl group from ATP to 1-hydroxyl of ribose-5-phosphate (Rib-5-P). The polypeptide is Ribose-phosphate pyrophosphokinase (Salmonella typhi).